Consider the following 142-residue polypeptide: Coactosin-like protein (142 aa).

Ala-2 is subject to N-acetylalanine. In terms of domain architecture, ADF-H spans 2-130 (ATKIDKEACR…EEDFIRSELK (129 aa)). The residue at position 23 (Ser-23) is a Phosphoserine. The interval 66-75 (TGDAMSKRSK) is flexible and important for F-actin binding. Lys-102 bears the N6-acetyllysine mark. Position 141 is a phosphoserine (Ser-141).

The protein belongs to the actin-binding proteins ADF family. Coactosin subfamily. As to quaternary structure, interacts with 5-lipoxygenase (ALOX5/5LO) in a calcium-independent manner. Binds to F-actin with a stoichiometry of 1:2.

The protein resides in the cytoplasm. Its subcellular location is the cytoskeleton. The protein localises to the nucleus. Its function is as follows. Binds to F-actin in a calcium-independent manner. Has no direct effect on actin depolymerization. Acts as a chaperone for ALOX5 (5LO), influencing both its stability and activity in leukotrienes synthesis. In Rattus norvegicus (Rat), this protein is Coactosin-like protein.